The sequence spans 230 residues: UPF0173 metal-dependent hydrolase Mbar_A3716 (230 aa).

Belongs to the UPF0173 family.

This Methanosarcina barkeri (strain Fusaro / DSM 804) protein is UPF0173 metal-dependent hydrolase Mbar_A3716.